The sequence spans 422 residues: Bifunctional enzyme IspD/IspF (422 aa).

The 2-C-methyl-D-erythritol 4-phosphate cytidylyltransferase stretch occupies residues 1–267 (MAVGLLLLAA…PISALSMPLP (267 aa)). The tract at residues 268–422 (LIGVGIDFHK…AIAVAQIYHR (155 aa)) is 2-C-methyl-D-erythritol 2,4-cyclodiphosphate synthase. 2 residues coordinate a divalent metal cation: D274 and H276. Residues 274-276 (DFH) and 301-302 (HS) contribute to the 4-CDP-2-C-methyl-D-erythritol 2-phosphate site. H309 is an a divalent metal cation binding site. 4-CDP-2-C-methyl-D-erythritol 2-phosphate contacts are provided by residues 323-325 (DIG), F404, and R407.

It in the N-terminal section; belongs to the IspD/TarI cytidylyltransferase family. IspD subfamily. This sequence in the C-terminal section; belongs to the IspF family. It depends on a divalent metal cation as a cofactor.

It catalyses the reaction 2-C-methyl-D-erythritol 4-phosphate + CTP + H(+) = 4-CDP-2-C-methyl-D-erythritol + diphosphate. The enzyme catalyses 4-CDP-2-C-methyl-D-erythritol 2-phosphate = 2-C-methyl-D-erythritol 2,4-cyclic diphosphate + CMP. It participates in isoprenoid biosynthesis; isopentenyl diphosphate biosynthesis via DXP pathway; isopentenyl diphosphate from 1-deoxy-D-xylulose 5-phosphate: step 2/6. It functions in the pathway isoprenoid biosynthesis; isopentenyl diphosphate biosynthesis via DXP pathway; isopentenyl diphosphate from 1-deoxy-D-xylulose 5-phosphate: step 4/6. Functionally, bifunctional enzyme that catalyzes the formation of 4-diphosphocytidyl-2-C-methyl-D-erythritol from CTP and 2-C-methyl-D-erythritol 4-phosphate (MEP) (IspD), and catalyzes the conversion of 4-diphosphocytidyl-2-C-methyl-D-erythritol 2-phosphate (CDP-ME2P) to 2-C-methyl-D-erythritol 2,4-cyclodiphosphate (ME-CPP) with a corresponding release of cytidine 5-monophosphate (CMP) (IspF). In Tropheryma whipplei (strain TW08/27) (Whipple's bacillus), this protein is Bifunctional enzyme IspD/IspF.